The following is a 146-amino-acid chain: MAIELHDLKPAPGAHKAKTRVGRGEGSKGKTAGRGTKGTGARKNVPEFFAGGQMPIHMQAPKLGGFHNPFRTEYQVVNLDKVEALFPKGGKITVDDLVSVGAVRDNELVKVLGTGELTVKVDLVVDAWSKSAQEKIEKAGGSVTKR.

Residues 1–46 (MAIELHDLKPAPGAHKAKTRVGRGEGSKGKTAGRGTKGTGARKNVP) form a disordered region. Positions 29 to 43 (GKTAGRGTKGTGARK) are enriched in low complexity.

This sequence belongs to the universal ribosomal protein uL15 family. In terms of assembly, part of the 50S ribosomal subunit.

Functionally, binds to the 23S rRNA. The sequence is that of Large ribosomal subunit protein uL15 from Cutibacterium acnes (strain DSM 16379 / KPA171202) (Propionibacterium acnes).